A 685-amino-acid polypeptide reads, in one-letter code: Probable inactive leucine-rich repeat receptor-like protein kinase At1g66830 (685 aa).

An N-terminal signal peptide occupies residues 1–21; the sequence is MSQLFLILCFILTHFFAIATS. Residues 22–305 lie on the Extracellular side of the membrane; sequence LNDQGLALLS…RRANHHSRLC (284 aa). Residues Asn-38 and Asn-48 are each glycosylated (N-linked (GlcNAc...) asparagine). 8 LRR repeats span residues 65-89, 90-113, 115-136, 137-161, 162-185, 186-210, 212-234, and 235-260; these read DMRV…IGSL, LSLR…LFGL, GLQS…EIGS, LKSL…LIPC, KKLK…LGSN, LVHL…VGSL, NLKG…SLGN, and LPEL…VLLN. Asn-151 carries an N-linked (GlcNAc...) asparagine glycan. N-linked (GlcNAc...) asparagine glycosylation occurs at Asn-193. N-linked (GlcNAc...) asparagine glycosylation is present at Asn-247. The helical transmembrane segment at 306 to 326 threads the bilayer; it reads IILTATGGTVAGIIFLASLFI. The Cytoplasmic portion of the chain corresponds to 327 to 685; it reads YYLRKASARA…ESFEKLVTSI (359 aa). The Protein kinase domain occupies 397–682; sequence KASAFLLGKS…SVLESFEKLV (286 aa). Ser-399, Ser-480, and Ser-590 each carry phosphoserine.

Belongs to the protein kinase superfamily. Ser/Thr protein kinase family.

The protein resides in the cell membrane. This is Probable inactive leucine-rich repeat receptor-like protein kinase At1g66830 from Arabidopsis thaliana (Mouse-ear cress).